The chain runs to 208 residues: Outer-membrane lipoprotein carrier protein (208 aa).

The first 22 residues, 1–22 (MKNLLCAVMLTSPLLYSTAVFA), serve as a signal peptide directing secretion.

It belongs to the LolA family. In terms of assembly, monomer.

Its subcellular location is the periplasm. In terms of biological role, participates in the translocation of lipoproteins from the inner membrane to the outer membrane. Only forms a complex with a lipoprotein if the residue after the N-terminal Cys is not an aspartate (The Asp acts as a targeting signal to indicate that the lipoprotein should stay in the inner membrane). The chain is Outer-membrane lipoprotein carrier protein from Shewanella putrefaciens (strain CN-32 / ATCC BAA-453).